The following is an 805-amino-acid chain: Polycystin-2-like protein 1 (805 aa).

Residues 1–59 are disordered; that stretch reads MNAVGSPEGQELQKLGSGAWDNPAYSGPPSPHGTLRVCTISSTGPLQPQPKKPEDEPQE. Residues 1 to 103 lie on the Cytoplasmic side of the membrane; sequence MNAVGSPEGQ…ELYIKTTLRE (103 aa). A lipid anchor (S-palmitoyl cysteine) is attached at C38. A helical transmembrane segment spans residues 104 to 124; it reads LLVYIVFLVDICLLTYGMTSS. At 125-356 the chain is on the extracellular side; sequence SAYYYTKVMS…NWDFFIVGCE (232 aa). 2 N-linked (GlcNAc...) asparagine glycosylation sites follow: N177 and N207. C210 and C223 are disulfide-bonded. A glycan (N-linked (GlcNAc...) asparagine) is linked at N241. The chain crosses the membrane as a helical span at residues 357 to 376; the sequence is VIFCVFIFYYVVEEILELHI. Positions 370 and 373 each coordinate Ca(2+). The Cytoplasmic portion of the chain corresponds to 377–384; that stretch reads HRLRYLSS. The helical transmembrane segment at 385–405 threads the bilayer; it reads IWNILDLVVILLSIVAVGFHI. 2 residues coordinate Ca(2+): N387 and D390. Topologically, residues 406-433 are extracellular; it reads FRTLEVNRLMGKLLQQPNTYADFEFLAF. A helical membrane pass occupies residues 434–454; the sequence is WQTQYNNMNAVNLFFAWIKIF. Residues 455 to 479 lie on the Cytoplasmic side of the membrane; it reads KYISFNKTMTQLSSTLARCAKDILG. A helical transmembrane segment spans residues 480–499; it reads FAVMFFIVFFAYAQLGYLLF. Over 500–511 the chain is Extracellular; the sequence is GTQVENFSTFIK. N505 carries N-linked (GlcNAc...) asparagine glycosylation. Residues 512–526 constitute an intramembrane region (pore-forming); that stretch reads CIFTQFRIILGDFDY. Over 527–536 the chain is Extracellular; sequence NAIDNANRIL. Residues 537 to 557 traverse the membrane as a helical segment; sequence GPAYFVTYVFFVFFVLLNMFL. Over 558-805 the chain is Cytoplasmic; sequence AIINDTYSEV…RGEIPTLQRS (248 aa). In terms of domain architecture, EF-hand spans 633–668; the sequence is HEITELTATFTKFDRDGNRILDEKEQEKMRQDLEEE. Coiled-coil stretches lie at residues 650–686 and 700–740; these read NRILDEKEQEKMRQDLEEERVALNTEIEKLGRSIVSS and GWVS…MLER. A required for homooligomerization region spans residues 704-763; it reads GEEFYMLTRRVLQLETVLEGVVSQIDAVGSKLKMLERKGWLAPSPGVKEQAIWKHPQPAP. The tract at residues 759–805 is disordered; that stretch reads PQPAPAVTPDPWGVQGGQESEVPYKREEEALEERRLSRGEIPTLQRS. Positions 780–796 are enriched in basic and acidic residues; sequence VPYKREEEALEERRLSR.

It belongs to the polycystin family. In terms of assembly, oligomer. Functional PKD2L1 homotetramer can be formed either through C-terminal trimerization followed by N-terminal dimerization of a fourth subunit with a subunit in the trimer or through dimerization followed by trimerization. Heterotetramer with either PKD1L1, PKD1L3 or PKD1; the heterotetrameric complex contains three PKD1L2 chains plus one chain from another family member. Interacts with PKD1L1, forming a ciliary calcium channel. Interacts with PKD1L3, forming a cation channel that is activated by low extracellular pH. Interacts with PKD1; this heteromeric functional cation channels is opened by hypo-osmotic stimulation. Interacts with RACK1; inhibits the channel activity possibly by impairing localization to the cell membrane. In terms of processing, palmitoylation is important for expression at the cell membrane and for channel activity. In terms of tissue distribution, detected in taste bud cells in fungiform papillae (at protein level). Ubiquitous. Expressed in adult heart, skeletal muscle, brain, spleen, testis, retina and liver. Isoform 4 appears to be expressed only in transformed lymphoblasts.

The protein resides in the cell projection. It is found in the cilium membrane. The protein localises to the cell membrane. Its subcellular location is the cytoplasmic vesicle. It carries out the reaction Ca(2+)(in) = Ca(2+)(out). It catalyses the reaction Na(+)(in) = Na(+)(out). The catalysed reaction is K(+)(in) = K(+)(out). The enzyme catalyses Mg(2+)(in) = Mg(2+)(out). The non-selective cation channel is gated following an off-response property by acid: gated open after the removal of acid stimulus, but not during acid application. Channel activity is inhibited by phosphatidylinositol-4,5-bisphosphate (PIP2). Non-selective cation channel activity is substantially increased when either the extracellular or intracellular calcium-ion concentration is raised. Regulation of non-selective cation channel activity by external calcium is bimodal, first sensitizing and subsequently inactivating the current. Homotetrameric, non-selective cation channel that is permeable to sodium, potassium, magnesium and calcium. Also forms functionnal heteromeric channels with PKD1, PKD1L1 and PKD1L3. Pore-forming subunit of a heterotetrameric, non-selective cation channel, formed by PKD1L2 and PKD1L3, that is permeable to sodium, potassium, magnesium and calcium and which may act as a sour taste receptor in gustatory cells; however, its contribution to sour taste perception is unclear in vivo and may be indirect. The homomeric and heteromeric channels formed by PKD1L2 and PKD1L3 are activated by low pH and Ca(2+), but opens only when the extracellular pH rises again and after the removal of acid stimulus. Pore-forming subunit of a calcium-permeant ion channel formed by PKD1L2 and PKD1L1 in primary cilia, where it controls cilium calcium concentration, without affecting cytoplasmic calcium concentration, and regulates sonic hedgehog/SHH signaling and GLI2 transcription. The PKD1L1:PKD2L1 complex channel is mechanosensitive only at high pressures and is highly temperature sensitive. Pore-forming subunit of a calcium-permeant ion channel formed by PKD1L2 and PKD1 that produces a transient increase in intracellular calcium concentration upon hypo-osmotic stimulation (200 mOsm). May play a role in the perception of carbonation taste. May play a role in the sensory perception of water, via a mechanism that activates the channel in response to dilution of salivary bicarbonate and changes in salivary pH. The polypeptide is Polycystin-2-like protein 1 (Homo sapiens (Human)).